Consider the following 314-residue polypeptide: Synaptophysin (314 aa).

The Cytoplasmic segment spans residues 1–25; it reads MLLLADMDVVNQLVAGGQFRVVKEP. Residues 21-228 enclose the MARVEL domain; it reads VVKEPLGFVK…NLWFVFKETG (208 aa). The helical transmembrane segment at 26–49 threads the bilayer; it reads LGFVKVLQWVFAIFAFATCGSYTG. Topologically, residues 50-107 are vesicular; it reads ELRLSVECANKTESALNIEVEFEYPFRLHQVYFDAPSCVKGGTTKIFLVGDYSSSAEF. N-linked (GlcNAc...) asparagine glycosylation occurs at N59. Y81 carries the phosphotyrosine modification. A helical transmembrane segment spans residues 108-131; the sequence is FVTVAVFAFLYSMGALATYIFLQN. The Cytoplasmic portion of the chain corresponds to 132 to 138; sequence KYRENNK. The helical transmembrane segment at 139 to 162 threads the bilayer; it reads GPMMDFLATAVFAFMWLVSSSAWA. Residues 163 to 200 lie on the Vesicular side of the membrane; that stretch reads KGLSDVKMATDPENIIKEMPMCRQTGNTCKELRDPVTS. A helical membrane pass occupies residues 201 to 224; the sequence is GLNTSVVFGFLNLVLWVGNLWFVF. Topologically, residues 225 to 314 are cytoplasmic; that stretch reads KETGWAAPFM…GAPTSFSNQM (90 aa). T227 is subject to Phosphothreonine. Residues 239–314 form a disordered region; the sequence is GAPEKQPAPG…GAPTSFSNQM (76 aa). Residues 254-264 are compositionally biased toward gly residues; the sequence is AGYGQGPGGYG. The tract at residues 255–305 is repeats, Gly-rich; sequence GYGQGPGGYGPQDSYGPQGGYQPDYGQPASGGGGGYGPQGDYGQQGYGQQG. A compositionally biased stretch (low complexity) spans 265–282; the sequence is PQDSYGPQGGYQPDYGQP. 2 positions are modified to phosphotyrosine: Y279 and Y296. Over residues 283–303 the composition is skewed to gly residues; that stretch reads ASGGGGGYGPQGDYGQQGYGQ.

This sequence belongs to the synaptophysin/synaptobrevin family. In terms of assembly, homohexamer or homotetramer. Interacts with SRCIN1. Interacts with VAMP2; the interaction is inhibited by interaction of VAPM2 with SEPT8. Post-translationally, ubiquitinated; mediated by SIAH1 or SIAH2 and leading to its subsequent proteasomal degradation. Phosphorylated by SRC.

Its subcellular location is the cytoplasmic vesicle. It is found in the secretory vesicle. It localises to the synaptic vesicle membrane. The protein localises to the synapse. The protein resides in the synaptosome. In terms of biological role, possibly involved in structural functions as organizing other membrane components or in targeting the vesicles to the plasma membrane. Involved in the regulation of short-term and long-term synaptic plasticity. The polypeptide is Synaptophysin (Syp) (Mus musculus (Mouse)).